Reading from the N-terminus, the 182-residue chain is NADH-quinone oxidoreductase subunit I (182 aa).

2 4Fe-4S ferredoxin-type domains span residues 50 to 82 and 92 to 121; these read IILSRDPDGDERCVACNLCAVACPVGCISLQKA and EFFRINFSRCIFCGLCEEACPTTAIQMTPD. Residues Cys-62, Cys-65, Cys-68, Cys-72, Cys-101, Cys-104, Cys-107, and Cys-111 each coordinate [4Fe-4S] cluster.

This sequence belongs to the complex I 23 kDa subunit family. NDH-1 is composed of 14 different subunits. Subunits NuoA, H, J, K, L, M, N constitute the membrane sector of the complex. [4Fe-4S] cluster serves as cofactor.

The protein localises to the cell inner membrane. The enzyme catalyses a quinone + NADH + 5 H(+)(in) = a quinol + NAD(+) + 4 H(+)(out). Its function is as follows. NDH-1 shuttles electrons from NADH, via FMN and iron-sulfur (Fe-S) centers, to quinones in the respiratory chain. The immediate electron acceptor for the enzyme in this species is believed to be ubiquinone. Couples the redox reaction to proton translocation (for every two electrons transferred, four hydrogen ions are translocated across the cytoplasmic membrane), and thus conserves the redox energy in a proton gradient. This is NADH-quinone oxidoreductase subunit I from Psychrobacter cryohalolentis (strain ATCC BAA-1226 / DSM 17306 / VKM B-2378 / K5).